A 166-amino-acid polypeptide reads, in one-letter code: Spiderine-1a (166 aa).

The N-terminal stretch at Met1–Ala18 is a signal peptide. Positions Thr19 to Arg58 are excised as a propeptide. The linear cationic cytotoxin domain stretch occupies residues Lys59 to Leu99. Positions Asn113–Glu166 constitute an Oxytoxin-type inhibitor cystine knot (ICK) domain. 5 cysteine pairs are disulfide-bonded: Cys116/Cys130, Cys123/Cys135, Cys127/Cys162, Cys129/Cys151, and Cys137/Cys149.

The protein belongs to the spiderine family. Cationic/spiderine subfamily. In terms of tissue distribution, expressed by the venom gland.

The protein localises to the secreted. Its function is as follows. Has antimicrobial, insecticidal, cytolytic and cytotoxic activity. Active against E.coli DH5alpha, E.faecalis VKM B 871, B.subtilis VKM B 501, A.globiformis VKM Ac 1112, P.aeruginosa PAO1 and S.aureus 209P in submicromolar or low micromolar ranges. Lyses human erythrocytes. Kills HeLA and A549 cells. In Oxyopes takobius (Lynx spider), this protein is Spiderine-1a.